The sequence spans 1019 residues: Pleckstrin homology domain-containing family M member 2 (1019 aa).

Residue Met1 is modified to N-acetylmethionine. The interaction with KIF5B stretch occupies residues 1-310; that stretch reads MEPGEVKDRI…LDPPDACTEL (310 aa). The region spanning 36-158 is the RUN domain; it reads RNHDKVLQRL…IRFELDLDAP (123 aa). Disordered regions lie at residues 230–458, 471–525, and 557–581; these read SVPS…SEGL, SPST…REAQ, and QPSP…SEMV. Polar residues-rich tracts occupy residues 243-272 and 279-291; these read DTVS…QNPF and TVSS…VHTT. Over residues 315–327 the composition is skewed to basic residues; it reads VTKKKKIGKKKKS. Residues 417–427 show a composition bias toward polar residues; sequence LNGQLDPSTWC. Residue Ser441 is modified to Phosphoserine. Basic and acidic residues predominate over residues 516-525; that stretch reads PLEDTTREAQ. The segment at 762 to 885 is interaction with sifA; it reads PCHCSPPEGT…VIPQGVAPSP (124 aa). Residues 771–873 enclose the PH domain; the sequence is TITKEGMLHY…WMQHLCQAVS (103 aa).

In terms of assembly, interacts with KLC2 (via TPR repeats). Interacts with KIF5B. Interacts with BORCS5. Interacts (via RUN domain) with ARL8B (GTP-bound form); PLEKHM1 and PLEKHM2 compete for interaction with ARL8B. Interacts with ARL8A. (Microbial infection) Interacts with the S.typhimurium sifA protein; required for S.typhimurium infection.

The protein localises to the cytoplasm. The protein resides in the lysosome membrane. Its function is as follows. Plays a role in lysosomes movement and localization at the cell periphery acting as an effector of ARL8B. Required for ARL8B to exert its effects on lysosome location, recruits kinesin-1 to lysosomes and hence direct their movement toward microtubule plus ends. Binding to ARL8B provides a link from lysosomal membranes to plus-end-directed motility. Critical factor involved in NK cell-mediated cytotoxicity. Drives the polarization of cytolytic granules and microtubule-organizing centers (MTOCs) toward the immune synapse between effector NK lymphocytes and target cells. Required for maintenance of the Golgi apparatus organization. May play a role in membrane tubulation. This Homo sapiens (Human) protein is Pleckstrin homology domain-containing family M member 2.